The following is a 451-amino-acid chain: ATP synthase subunit beta (451 aa).

143–150 (GGAGVGKT) contributes to the ATP binding site.

Belongs to the ATPase alpha/beta chains family. F-type ATPases have 2 components, CF(1) - the catalytic core - and CF(0) - the membrane proton channel. CF(1) has five subunits: alpha(3), beta(3), gamma(1), delta(1), epsilon(1). CF(0) has three main subunits: a(1), b(2) and c(9-12). The alpha and beta chains form an alternating ring which encloses part of the gamma chain. CF(1) is attached to CF(0) by a central stalk formed by the gamma and epsilon chains, while a peripheral stalk is formed by the delta and b chains.

It is found in the cell membrane. The enzyme catalyses ATP + H2O + 4 H(+)(in) = ADP + phosphate + 5 H(+)(out). Functionally, produces ATP from ADP in the presence of a proton gradient across the membrane. The catalytic sites are hosted primarily by the beta subunits. In Coprothermobacter proteolyticus (strain ATCC 35245 / DSM 5265 / OCM 4 / BT), this protein is ATP synthase subunit beta.